The following is a 1967-amino-acid chain: RQC trigger complex helicase SLH1 (1967 aa).

In terms of domain architecture, Helicase ATP-binding 1 spans 297 to 485 (PVAYKTNENM…FLGVNRQIGM (189 aa)). 310–317 (APTGAGKT) lines the ATP pocket. Residues 427-430 (DEVH) carry the DEVH box motif. A Helicase C-terminal 1 domain is found at 516–735 (NIDKVAYDKL…NVDEAIEWLG (220 aa)). The SEC63 1 domain maps to 795–1100 (AKDLGRVSSD…GCESTHAISF (306 aa)). The 176-residue stretch at 1149 to 1324 (YTLYNTNENA…WLGVKDHGLY (176 aa)) folds into the Helicase ATP-binding 2 domain. 1162–1169 (SPTGSGKT) contributes to the ATP binding site. A DEAH box motif is present at residues 1266 to 1269 (DEIH). In terms of domain architecture, Helicase C-terminal 2 spans 1355–1550 (MNKPVFMAIK…SLHKVLDDHL (196 aa)). An SEC63 2 domain is found at 1626 to 1776 (ATPFLSISSY…MMQCIKQGYW (151 aa)).

This sequence belongs to the helicase family. SKI2 subfamily. Component of the RQT (ribosome quality control trigger) complex, composed of SLH1, CUE3, and RQT4. Interacts with CUE3. Interacts with RQT4. Interacts with HEL2. Associates with translating ribosomes.

It localises to the cytoplasm. Its subcellular location is the cytosol. The enzyme catalyses ATP + H2O = ADP + phosphate + H(+). Its function is as follows. Involved in activation of the ribosome quality control (RQC) pathway, a pathway that degrades nascent peptide chains during problematic translation. Drives the splitting of stalled ribosomes that are polyubiquitinated in a HEL2-dependent manner, as part of the ribosome quality control trigger (RQT) complex. Also represses the translation of non-poly(A) mRNAs together with SKI2. May block translation by inhibiting translation initiation factor 5B (FUN12) action on mRNAs lacking a 3' poly(A) structure. Involved in antiviral defense, preventing L-A dsRNA virus propagation by specifically blocking translation of viral mRNAs. This is RQC trigger complex helicase SLH1 from Saccharomyces cerevisiae (strain ATCC 204508 / S288c) (Baker's yeast).